A 98-amino-acid polypeptide reads, in one-letter code: Exopolysaccharide production repressor protein (98 aa).

Helical transmembrane passes span Val6–Gly26 and Thr35–Trp55. The tract at residues Ala73 to Ser98 is disordered. Residues Ser86 to Ser98 are compositionally biased toward basic residues.

It localises to the cell membrane. The protein operates within glycan metabolism; exopolysaccharide biosynthesis. Its function is as follows. Inhibition of exopolysaccharide synthesis (EPS) and nodulation ability (NOD). This is Exopolysaccharide production repressor protein (exoX) from Rhizobium meliloti (strain 1021) (Ensifer meliloti).